The sequence spans 360 residues: Phenylalanine--tRNA ligase alpha subunit (360 aa).

Residue Glu-260 coordinates Mg(2+).

The protein belongs to the class-II aminoacyl-tRNA synthetase family. Phe-tRNA synthetase alpha subunit type 1 subfamily. Tetramer of two alpha and two beta subunits. The cofactor is Mg(2+).

It is found in the cytoplasm. It carries out the reaction tRNA(Phe) + L-phenylalanine + ATP = L-phenylalanyl-tRNA(Phe) + AMP + diphosphate + H(+). This chain is Phenylalanine--tRNA ligase alpha subunit, found in Paracoccus denitrificans (strain Pd 1222).